The sequence spans 114 residues: uncharacterized protein (114 aa).

Functionally, possibly involved in pGI2 replication mechanism. This is an uncharacterized protein from Bacillus thuringiensis.